The following is a 1132-amino-acid chain: Phosphatidylinositide phosphatase SAC2 (1132 aa).

The SAC domain maps to 167 to 518 (LKMFMDSESF…GDSISRQYAG (352 aa)). The disordered stretch occupies residues 250–269 (ESSDDDKSSPETPPQDSTCV). Residues 593-760 (RSHQELISQL…KSSKPHEDII (168 aa)) form the hSac2 domain. Residues Ser714, Ser827, and Ser830 each carry the phosphoserine modification. A disordered region spans residues 833 to 872 (TMENPGVMGNKVQGESDGDISSDNDSYHSDEFLTNSKSEE). The span at 857–872 (DSYHSDEFLTNSKSEE) shows a compositional bias: basic and acidic residues. Ser879, Ser882, Ser908, and Ser911 each carry phosphoserine. 2 stretches are compositionally biased toward polar residues: residues 908–918 (SASSIDVSTHA) and 994–1005 (RVSNEETQSEPM). Disordered regions lie at residues 908-951 (SASS…HTRT) and 981-1016 (VAQK…SQLN). Residue Ser1103 is modified to Phosphoserine.

As to quaternary structure, homodimer. Interacts with OCRL and RAB5. Interacts with INPP5B and INPP4A. Interacts with STAT3; the interaction is independent of STAT3 'Tyr-705' phosphorylation status. As to expression, highly expressed in brain and hypothalamus, expressed in lung and pancreas, and detected at low levels in liver and heart (at protein level).

It localises to the membrane. The protein resides in the clathrin-coated pit. It is found in the early endosome. The protein localises to the recycling endosome. The enzyme catalyses a myo-inositol phosphate + H2O = myo-inositol + phosphate. Functionally, inositol 4-phosphatase which mainly acts on phosphatidylinositol 4-phosphate. May be functionally linked to OCRL, which converts phosphatidylinositol 4,5-bisphosphate to phosphatidylinositol, for a sequential dephosphorylation of phosphatidylinositol 4,5-bisphosphate at the 5 and 4 position of inositol, thus playing an important role in the endocytic recycling. Regulator of TF:TFRC and integrins recycling pathway, is also involved in cell migration mechanisms. Modulates AKT/GSK3B pathway by decreasing AKT and GSK3B phosphorylation. Negatively regulates STAT3 signaling pathway through inhibition of STAT3 phosphorylation and translocation to the nucleus. Functionally important modulator of cardiac myocyte size and of the cardiac response to stress. May play a role as negative regulator of axon regeneration after central nervous system injuries. The protein is Phosphatidylinositide phosphatase SAC2 of Mus musculus (Mouse).